Here is a 74-residue protein sequence, read N- to C-terminus: Kappa-stichotoxin-Hmg1a (74 aa).

The N-terminal stretch at Met1–Ala22 is a signal peptide. A propeptide spanning residues Arg23–Arg39 is cleaved from the precursor. Positions Cys42–Cys74 constitute a ShKT domain. Cystine bridges form between Cys42-Cys74, Cys51-Cys67, and Cys56-Cys71.

The protein belongs to the sea anemone type 1 potassium channel toxin family. Type 1a subfamily.

It localises to the secreted. It is found in the nematocyst. Potently blocks the voltage-gated potassium channel Kv1.1/KCNA1 (Ki=75 pM), KcsA (Ki~1 nM) and moderately blocks Kv1.2/KCNA2 (Ki=2.5 nM) and Kv1.3/KCNA3 (Ki=3.1 nM). Also facilitates acetylcholine release at the avian neuromuscular junction. Blockade and dissociation rate are sensitive to voltage. This Heteractis magnifica (Magnificent sea anemone) protein is Kappa-stichotoxin-Hmg1a.